The chain runs to 201 residues: Probable thymidylate kinase (201 aa).

10 to 17 contributes to the ATP binding site; sequence GIDGSGKS.

This sequence belongs to the thymidylate kinase family.

The enzyme catalyses dTMP + ATP = dTDP + ADP. This chain is Probable thymidylate kinase, found in Methanococcoides burtonii (strain DSM 6242 / NBRC 107633 / OCM 468 / ACE-M).